Here is a 106-residue protein sequence, read N- to C-terminus: Guanyl-specific ribonuclease Th1 (106 aa).

2 disulfides stabilise this stretch: cysteine 5–cysteine 103 and cysteine 23–cysteine 84. Histidine 39 is a catalytic residue. Glutamate 58 functions as the Proton acceptor in the catalytic mechanism. Residue histidine 92 is the Proton donor of the active site.

This sequence belongs to the ribonuclease N1/T1 family.

It catalyses the reaction [RNA] containing guanosine + H2O = an [RNA fragment]-3'-guanosine-3'-phosphate + a 5'-hydroxy-ribonucleotide-3'-[RNA fragment].. This Trichoderma harzianum (Hypocrea lixii) protein is Guanyl-specific ribonuclease Th1.